The primary structure comprises 339 residues: Lipoyl synthase (339 aa).

A disordered region spans residues 13-35; that stretch reads RPKLDAPARPRHPEKAHRPDTAI. C68, C73, C79, C94, C98, C101, and S307 together coordinate [4Fe-4S] cluster. A Radical SAM core domain is found at 80–296; sequence WEKRHATFMI…ETTAYAKGFL (217 aa).

Belongs to the radical SAM superfamily. Lipoyl synthase family. It depends on [4Fe-4S] cluster as a cofactor.

The protein localises to the cytoplasm. It carries out the reaction [[Fe-S] cluster scaffold protein carrying a second [4Fe-4S](2+) cluster] + N(6)-octanoyl-L-lysyl-[protein] + 2 oxidized [2Fe-2S]-[ferredoxin] + 2 S-adenosyl-L-methionine + 4 H(+) = [[Fe-S] cluster scaffold protein] + N(6)-[(R)-dihydrolipoyl]-L-lysyl-[protein] + 4 Fe(3+) + 2 hydrogen sulfide + 2 5'-deoxyadenosine + 2 L-methionine + 2 reduced [2Fe-2S]-[ferredoxin]. The protein operates within protein modification; protein lipoylation via endogenous pathway; protein N(6)-(lipoyl)lysine from octanoyl-[acyl-carrier-protein]: step 2/2. Functionally, catalyzes the radical-mediated insertion of two sulfur atoms into the C-6 and C-8 positions of the octanoyl moiety bound to the lipoyl domains of lipoate-dependent enzymes, thereby converting the octanoylated domains into lipoylated derivatives. The polypeptide is Lipoyl synthase (Methylorubrum extorquens (strain CM4 / NCIMB 13688) (Methylobacterium extorquens)).